The sequence spans 375 residues: Homoserine O-succinyltransferase (375 aa).

In terms of domain architecture, AB hydrolase-1 spans 48–358; it reads NAVLVCHALS…DAGHDSFLLD (311 aa). The active-site Nucleophile is Ser154. Arg224 serves as a coordination point for substrate. Catalysis depends on residues Asp319 and His352. Position 353 (Asp353) interacts with substrate.

The protein belongs to the AB hydrolase superfamily. MetX family. Homodimer.

The protein localises to the cytoplasm. It carries out the reaction L-homoserine + succinyl-CoA = O-succinyl-L-homoserine + CoA. It functions in the pathway amino-acid biosynthesis; L-methionine biosynthesis via de novo pathway; O-succinyl-L-homoserine from L-homoserine: step 1/1. Transfers a succinyl group from succinyl-CoA to L-homoserine, forming succinyl-L-homoserine. The sequence is that of Homoserine O-succinyltransferase from Aromatoleum aromaticum (strain DSM 19018 / LMG 30748 / EbN1) (Azoarcus sp. (strain EbN1)).